The primary structure comprises 694 residues: Elongation factor G (694 aa).

The region spanning 6–288 (KLYRNIGIAA…GVIEYLPSPT (283 aa)) is the tr-type G domain. GTP contacts are provided by residues 15–22 (AHVDAGKT), 86–90 (DTPGH), and 140–143 (NKMD).

It belongs to the TRAFAC class translation factor GTPase superfamily. Classic translation factor GTPase family. EF-G/EF-2 subfamily.

Its subcellular location is the cytoplasm. Its function is as follows. Catalyzes the GTP-dependent ribosomal translocation step during translation elongation. During this step, the ribosome changes from the pre-translocational (PRE) to the post-translocational (POST) state as the newly formed A-site-bound peptidyl-tRNA and P-site-bound deacylated tRNA move to the P and E sites, respectively. Catalyzes the coordinated movement of the two tRNA molecules, the mRNA and conformational changes in the ribosome. The sequence is that of Elongation factor G from Legionella pneumophila subsp. pneumophila (strain Philadelphia 1 / ATCC 33152 / DSM 7513).